The primary structure comprises 212 residues: Thymidylate kinase (212 aa).

10-17 serves as a coordination point for ATP; it reads GLEGAGKT.

The protein belongs to the thymidylate kinase family.

It carries out the reaction dTMP + ATP = dTDP + ADP. Its function is as follows. Phosphorylation of dTMP to form dTDP in both de novo and salvage pathways of dTTP synthesis. In Photorhabdus laumondii subsp. laumondii (strain DSM 15139 / CIP 105565 / TT01) (Photorhabdus luminescens subsp. laumondii), this protein is Thymidylate kinase.